Here is a 115-residue protein sequence, read N- to C-terminus: T cell receptor beta variable 11-1 (115 aa).

An N-terminal signal peptide occupies residues 1–21 (MSTRLLCWMALCLLGAELSEA). The Ig-like domain maps to 22-115 (EVAQSPRYKI…SAMYLCASSL (94 aa)). Cys42 and Cys111 are disulfide-bonded.

In terms of assembly, alpha-beta TR is a heterodimer composed of an alpha and beta chain; disulfide-linked. The alpha-beta TR is associated with the transmembrane signaling CD3 coreceptor proteins to form the TR-CD3 (TcR or TCR). The assembly of alpha-beta TR heterodimers with CD3 occurs in the endoplasmic reticulum where a single alpha-beta TR heterodimer associates with one CD3D-CD3E heterodimer, one CD3G-CD3E heterodimer and one CD247 homodimer forming a stable octameric structure. CD3D-CD3E and CD3G-CD3E heterodimers preferentially associate with TR alpha and TR beta chains, respectively. The association of the CD247 homodimer is the last step of TcR assembly in the endoplasmic reticulum and is required for transport to the cell surface.

It localises to the cell membrane. Functionally, v region of the variable domain of T cell receptor (TR) beta chain that participates in the antigen recognition. Alpha-beta T cell receptors are antigen specific receptors which are essential to the immune response and are present on the cell surface of T lymphocytes. Recognize peptide-major histocompatibility (MH) (pMH) complexes that are displayed by antigen presenting cells (APC), a prerequisite for efficient T cell adaptive immunity against pathogens. Binding of alpha-beta TR to pMH complex initiates TR-CD3 clustering on the cell surface and intracellular activation of LCK that phosphorylates the ITAM motifs of CD3G, CD3D, CD3E and CD247 enabling the recruitment of ZAP70. In turn ZAP70 phosphorylates LAT, which recruits numerous signaling molecules to form the LAT signalosome. The LAT signalosome propagates signal branching to three major signaling pathways, the calcium, the mitogen-activated protein kinase (MAPK) kinase and the nuclear factor NF-kappa-B (NF-kB) pathways, leading to the mobilization of transcription factors that are critical for gene expression and essential for T cell growth and differentiation. The T cell repertoire is generated in the thymus, by V-(D)-J rearrangement. This repertoire is then shaped by intrathymic selection events to generate a peripheral T cell pool of self-MH restricted, non-autoaggressive T cells. Post-thymic interaction of alpha-beta TR with the pMH complexes shapes TR structural and functional avidity. The protein is T cell receptor beta variable 11-1 of Homo sapiens (Human).